Reading from the N-terminus, the 214-residue chain is Octanoyltransferase (214 aa).

Positions 28–203 constitute a BPL/LPL catalytic domain; the sequence is GSGAETLLLL…RFEGFLDEFM (176 aa). Substrate is bound by residues 66–73, 133–135, and 146–148; these read RGGDVTYH, SIG, and GFA. C164 serves as the catalytic Acyl-thioester intermediate.

Belongs to the LipB family.

It localises to the cytoplasm. It catalyses the reaction octanoyl-[ACP] + L-lysyl-[protein] = N(6)-octanoyl-L-lysyl-[protein] + holo-[ACP] + H(+). It functions in the pathway protein modification; protein lipoylation via endogenous pathway; protein N(6)-(lipoyl)lysine from octanoyl-[acyl-carrier-protein]: step 1/2. Catalyzes the transfer of endogenously produced octanoic acid from octanoyl-acyl-carrier-protein onto the lipoyl domains of lipoate-dependent enzymes. Lipoyl-ACP can also act as a substrate although octanoyl-ACP is likely to be the physiological substrate. The polypeptide is Octanoyltransferase (Geotalea uraniireducens (strain Rf4) (Geobacter uraniireducens)).